Reading from the N-terminus, the 180-residue chain is MIIYLHGFDSNSPGNHEKVLQLQFIDPDVRLISYSTRHPKHDMQHLLKEVDKMLQLNVDERPLICGVGLGGYWAERIGFLCDIRQVIFNPNLFPYENMEGKIDRPEEYADIATKCVTNFREKNRDRCLVILSRNDESLNSQRTSEELHHYYEIVWDEEQTHKFKNISPHLQRIKAFKTLG.

This sequence belongs to the UPF0227 family.

The chain is UPF0227 protein YcfP from Escherichia coli O7:K1 (strain IAI39 / ExPEC).